We begin with the raw amino-acid sequence, 375 residues long: Glutamate 5-kinase (375 aa).

Residue Lys-3 coordinates ATP. Substrate contacts are provided by Ser-44, Asp-131, and Asn-143. ATP contacts are provided by residues 163-164 and 205-211; these read SD and TGGMVTK. One can recognise a PUA domain in the interval 269–346; sequence EGTLWVDDGA…GDIEALLGYR (78 aa).

The protein belongs to the glutamate 5-kinase family.

It localises to the cytoplasm. It carries out the reaction L-glutamate + ATP = L-glutamyl 5-phosphate + ADP. It functions in the pathway amino-acid biosynthesis; L-proline biosynthesis; L-glutamate 5-semialdehyde from L-glutamate: step 1/2. In terms of biological role, catalyzes the transfer of a phosphate group to glutamate to form L-glutamate 5-phosphate. The polypeptide is Glutamate 5-kinase (Rhodospirillum rubrum (strain ATCC 11170 / ATH 1.1.1 / DSM 467 / LMG 4362 / NCIMB 8255 / S1)).